An 810-amino-acid polypeptide reads, in one-letter code: DNA replication licensing factor mcm-6 (810 aa).

Positions isoleucine 346–isoleucine 553 constitute an MCM domain. 6 residues coordinate ATP: serine 400, threonine 401, alanine 402, lysine 403, serine 404, and asparagine 505. Residues serine 529–aspartate 532 carry the Arginine finger motif. ADP-binding residues include arginine 622 and glutamate 625. Positions lysine 685–lysine 705 are disordered.

The protein belongs to the MCM family. In terms of assembly, component of the mcm2-7 complex. The complex forms a toroidal hexameric ring with the proposed subunit order mcm2-mcm6-mcm4-mcm7-mcm3-mcm5 (By simililarity).

It localises to the nucleus. It catalyses the reaction ATP + H2O = ADP + phosphate + H(+). Acts as a component of the MCM2-7 complex (MCM complex) which is the replicative helicase essential for 'once per cell cycle' DNA replication initiation and elongation in eukaryotic cells. Core component of CDC45-MCM-GINS (CMG) helicase, the molecular machine that unwinds template DNA during replication, and around which the replisome is built. The active ATPase sites in the MCM2-7 ring are formed through the interaction surfaces of two neighboring subunits such that a critical structure of a conserved arginine finger motif is provided in trans relative to the ATP-binding site of the Walker A box of the adjacent subunit. The six ATPase active sites, however, are likely to contribute differentially to the complex helicase activity. This Caenorhabditis briggsae protein is DNA replication licensing factor mcm-6.